The following is a 300-amino-acid chain: Putative hydro-lyase Dshi_3152 (300 aa).

It belongs to the D-glutamate cyclase family.

The protein is Putative hydro-lyase Dshi_3152 of Dinoroseobacter shibae (strain DSM 16493 / NCIMB 14021 / DFL 12).